A 488-amino-acid polypeptide reads, in one-letter code: Argininosuccinate lyase 2 (488 aa).

The protein belongs to the lyase 1 family. Argininosuccinate lyase subfamily.

It is found in the cytoplasm. It carries out the reaction 2-(N(omega)-L-arginino)succinate = fumarate + L-arginine. Its pathway is amino-acid biosynthesis; L-arginine biosynthesis; L-arginine from L-ornithine and carbamoyl phosphate: step 3/3. This chain is Argininosuccinate lyase 2, found in Rhizobium meliloti (strain 1021) (Ensifer meliloti).